The chain runs to 177 residues: Adenine phosphoribosyltransferase (177 aa).

This sequence belongs to the purine/pyrimidine phosphoribosyltransferase family. In terms of assembly, homodimer.

Its subcellular location is the cytoplasm. It carries out the reaction AMP + diphosphate = 5-phospho-alpha-D-ribose 1-diphosphate + adenine. It participates in purine metabolism; AMP biosynthesis via salvage pathway; AMP from adenine: step 1/1. Catalyzes a salvage reaction resulting in the formation of AMP, that is energically less costly than de novo synthesis. In Chlorobium phaeovibrioides (strain DSM 265 / 1930) (Prosthecochloris vibrioformis (strain DSM 265)), this protein is Adenine phosphoribosyltransferase.